Reading from the N-terminus, the 269-residue chain is 3-deoxy-manno-octulosonate cytidylyltransferase (269 aa).

This sequence belongs to the KdsB family.

Its subcellular location is the cytoplasm. It carries out the reaction 3-deoxy-alpha-D-manno-oct-2-ulosonate + CTP = CMP-3-deoxy-beta-D-manno-octulosonate + diphosphate. The protein operates within nucleotide-sugar biosynthesis; CMP-3-deoxy-D-manno-octulosonate biosynthesis; CMP-3-deoxy-D-manno-octulosonate from 3-deoxy-D-manno-octulosonate and CTP: step 1/1. It participates in bacterial outer membrane biogenesis; lipopolysaccharide biosynthesis. In terms of biological role, activates KDO (a required 8-carbon sugar) for incorporation into bacterial lipopolysaccharide in Gram-negative bacteria. The chain is 3-deoxy-manno-octulosonate cytidylyltransferase from Cupriavidus pinatubonensis (strain JMP 134 / LMG 1197) (Cupriavidus necator (strain JMP 134)).